Consider the following 639-residue polypeptide: Centromere protein T (639 aa).

Disordered stretches follow at residues 1–64 (MDGR…RPNA), 266–294 (QLSDSKTSAQRSNTSYPAHEKARLEGLVS), 307–451 (SEKD…ERGT), 458–477 (AAEEEATDDESDKEDHESEE), and 494–534 (QPVL…TREP). A compositionally biased stretch (low complexity) spans 12–23 (RAAPTPRVAVRS). The segment at 80-500 (IIQNQPQVSP…YRPQPVLSPP (421 aa)) is flexible stalk domain. A compositionally biased stretch (polar residues) spans 267–281 (LSDSKTSAQRSNTSY). Basic and acidic residues-rich tracts occupy residues 307–319 (SEKDLITDHEHVD), 329–338 (QGEEEQDHSQ), 356–371 (TEHHADAEYSEHSEKK), and 432–449 (PGAKPLKEAVEQTGEIER). Residues 458–469 (AAEEEATDDESD) are compositionally biased toward acidic residues.

It belongs to the CENP-T/CNN1 family. As to quaternary structure, component of the CENPA-CAD complex, composed of CENPI, CENPK, CENPL, CENPO, CENPP, CENPQ, CENPR and CENPS. The CENPA-CAD complex is probably recruited on centromeres by the CENPA-NAC complex, at least composed of CENPA, CENPC, CENPH, CENPM, CENPN, CENPT and CENPU. Identified in a centromeric complex containing histones H2A, H2B, H3 and H4, and at least CENPA, CENPB, CENPC, CENPT, CENPN, HJURP, SUPT16H, SSRP1 and RSF1. Interacts (via N-terminus) with the NDC80 complex. Heterodimer with CENPW; this dimer coassembles with CENPS-CENPX heterodimers at centromeres to form the tetrameric CENP-T-W-S-X complex.

The protein localises to the nucleus. It localises to the chromosome. Its subcellular location is the centromere. It is found in the kinetochore. Its function is as follows. Component of the CENPA-NAC (nucleosome-associated) complex, a complex that plays a central role in assembly of kinetochore proteins, mitotic progression and chromosome segregation. The CENPA-NAC complex recruits the CENPA-CAD (nucleosome distal) complex and may be involved in incorporation of newly synthesized CENPA into centromeres. Part of a nucleosome-associated complex that binds specifically to histone H3-containing nucleosomes at the centromere, as opposed to nucleosomes containing CENPA. Component of the heterotetrameric CENP-T-W-S-X complex that binds and supercoils DNA, and plays an important role in kinetochore assembly. CENPT has a fundamental role in kinetochore assembly and function. It is one of the inner kinetochore proteins, with most further proteins binding downstream. Required for normal chromosome organization and normal progress through mitosis. The polypeptide is Centromere protein T (CENPT) (Gallus gallus (Chicken)).